A 114-amino-acid chain; its full sequence is Macrophage migration inhibitory factor homolog (114 aa).

Residue Pro2 is the Proton acceptor; via imino nitrogen of the active site. Residues Lys33 and Asn98 each coordinate substrate.

This sequence belongs to the MIF family.

It localises to the secreted. It carries out the reaction L-dopachrome = 5,6-dihydroxyindole-2-carboxylate. The catalysed reaction is 3-phenylpyruvate = enol-phenylpyruvate. Its function is as follows. Tautomerization of the methyl ester of L-dopachrome. Inhibits migration of human peripheral blood mononuclear cells. This chain is Macrophage migration inhibitory factor homolog, found in Trichuris trichiura (Whipworm).